We begin with the raw amino-acid sequence, 493 residues long: GTPase Der (493 aa).

2 EngA-type G domains span residues 3-166 (PVVA…AEAL) and 206-379 (IKLA…KSAT). GTP-binding positions include 9–16 (GRPNVGKS), 56–60 (DTGGI), 118–121 (NKVD), 212–219 (GRPNVGKS), 259–263 (DTAGV), and 324–327 (NKWD). Residues 380 to 464 (TRVGTSVLTR…PIRIQFQNSE (85 aa)) enclose the KH-like domain.

It belongs to the TRAFAC class TrmE-Era-EngA-EngB-Septin-like GTPase superfamily. EngA (Der) GTPase family. In terms of assembly, associates with the 50S ribosomal subunit.

Its function is as follows. GTPase that plays an essential role in the late steps of ribosome biogenesis. The sequence is that of GTPase Der from Vibrio atlanticus (strain LGP32) (Vibrio splendidus (strain Mel32)).